The chain runs to 95 residues: Small ribosomal subunit protein uS19 (95 aa).

Positions 76-95 (PTRRFGGHADKKAKKGELKK) are disordered. Basic and acidic residues predominate over residues 82-95 (GHADKKAKKGELKK).

Belongs to the universal ribosomal protein uS19 family.

Protein S19 forms a complex with S13 that binds strongly to the 16S ribosomal RNA. The polypeptide is Small ribosomal subunit protein uS19 (rpsS) (Thermotoga maritima (strain ATCC 43589 / DSM 3109 / JCM 10099 / NBRC 100826 / MSB8)).